The sequence spans 537 residues: Phosphoenolpyruvate carboxykinase (ATP) (537 aa).

Substrate contacts are provided by R61, Y195, and K201. ATP is bound by residues K201, H220, and 236-244 (GLSGTGKTT). Residues K201 and H220 each coordinate Mn(2+). Mn(2+) is bound at residue D257. Residues E285, R323, and T448 each contribute to the ATP site. R323 contacts substrate.

It belongs to the phosphoenolpyruvate carboxykinase (ATP) family. It depends on Mn(2+) as a cofactor.

Its subcellular location is the cytoplasm. The enzyme catalyses oxaloacetate + ATP = phosphoenolpyruvate + ADP + CO2. Its pathway is carbohydrate biosynthesis; gluconeogenesis. Involved in the gluconeogenesis. Catalyzes the conversion of oxaloacetate (OAA) to phosphoenolpyruvate (PEP) through direct phosphoryl transfer between the nucleoside triphosphate and OAA. The polypeptide is Phosphoenolpyruvate carboxykinase (ATP) (Rhodopseudomonas palustris (strain ATCC BAA-98 / CGA009)).